A 276-amino-acid chain; its full sequence is MSLWFLVFLSVLQGVTELFPVSSLGHTLLVPALFGMHIDKHAPQLLPFLVALHLGTALALLWYFRARWIALIGGFFAQLGGRKNDDGHLMWALIIGTIPTGIVGLLLEKRIERVFHDLRIVAIALIVNGVLLWLGDRIQRSRAHQAPEKMTFKQAFFVGLAQIGALIPGFSRSGLTMIAGNVAGLTAEKAAEFSFLLGTPIIFAAGVLELPKLFHARDQLADALLGGVLTAIAAYLSVRFLMRYFEGRGRLASFGVYCVIAGVFCLGWFMLHPQPV.

The next 8 helical transmembrane spans lie at 1 to 21, 44 to 64, 87 to 107, 114 to 134, 150 to 170, 190 to 210, 222 to 242, and 251 to 271; these read MSLW…LFPV, QLLP…LWYF, GHLM…GLLL, VFHD…LLWL, MTFK…IPGF, AAEF…VLEL, DALL…RFLM, and LASF…WFML.

Belongs to the UppP family.

The protein resides in the cell inner membrane. The catalysed reaction is di-trans,octa-cis-undecaprenyl diphosphate + H2O = di-trans,octa-cis-undecaprenyl phosphate + phosphate + H(+). Its function is as follows. Catalyzes the dephosphorylation of undecaprenyl diphosphate (UPP). Confers resistance to bacitracin. In Burkholderia orbicola (strain AU 1054), this protein is Undecaprenyl-diphosphatase 2.